A 302-amino-acid polypeptide reads, in one-letter code: Taste receptor type 2 member 104 (302 aa).

Residues 1–7 (MLSMLES) are Extracellular-facing. The chain crosses the membrane as a helical span at residues 8–28 (ILLSVATSEAMLGILGNIFIV). Residues 29–43 (LVNCTNWVRNKKLSK) lie on the Cytoplasmic side of the membrane. A helical transmembrane segment spans residues 44–64 (INFILTGLAISRVFTIWIITL). The Extracellular segment spans residues 65–87 (DAYTKVFFLTTLMPSNLHECISY). The chain crosses the membrane as a helical span at residues 88–108 (IWVIINHLSVWFATSLSIFYF). The Cytoplasmic portion of the chain corresponds to 109–128 (LKIANFSHYIFLWLKRRADK). The chain crosses the membrane as a helical span at residues 129-149 (VFVFLIGYLIITWLASFPLAV). Residues 150–182 (TVIKNIKVHHNNTSWLIQLEKRELLINYVFANM) lie on the Extracellular side of the membrane. 2 N-linked (GlcNAc...) asparagine glycosylation sites follow: asparagine 160 and asparagine 161. Residues 183–203 (GPISLFMVAVFTCFLLTISLW) form a helical membrane-spanning segment. Over 204–233 (RHRRRMQSTGSKFRDLNTEVHVKAMKVLIS) the chain is Cytoplasmic. A helical membrane pass occupies residues 234–254 (FIILFILYFMGVLIETLCLFL). Over 255–257 (TEN) the chain is Extracellular. Residues 258–278 (ILLFIFGFTLSSTYPCCHSFI) traverse the membrane as a helical segment. At 279–302 (LILTSRELKQASMRALQRLKCCET) the chain is on the cytoplasmic side.

It belongs to the G-protein coupled receptor T2R family.

It is found in the membrane. Functionally, putative taste receptor which may play a role in the perception of bitterness. The chain is Taste receptor type 2 member 104 from Rattus norvegicus (Rat).